The primary structure comprises 499 residues: Bestrophin homolog 22 (499 aa).

4 helical membrane passes run 29-49 (WKAVFGQLAVWTAVFLLISCI), 77-97 (IPLTFLLGFFVSFVVARWGSI), 235-255 (LVYPQVIFLAVRIYFMICLIG), and 267-287 (GIDLWLPITTMVQFLVYMGWM). Residues 417–432 (HNAKHAKQRGLERANS) are compositionally biased toward basic and acidic residues. Disordered stretches follow at residues 417-455 (HNAKHAKQRGLERANSPDKCLSKMRSRSNGKFRTSANGS) and 474-499 (TSNPNQVHPHSIAVFPPEEQQTTSRH).

This sequence belongs to the anion channel-forming bestrophin (TC 1.A.46) family. Calcium-sensitive chloride channel subfamily. Forms oligomers.

The protein localises to the cell membrane. Functionally, forms chloride channels. This is Bestrophin homolog 22 (best-22) from Caenorhabditis elegans.